The chain runs to 214 residues: DELTA-actitoxin-Aeq1b (214 aa).

A signal peptide spans 1 to 19 (MSRLIIVFIVVTMICAATA). The propeptide occupies 20–35 (LSSKKSINEDEKDEKR). Positions 38 to 47 (AVAGAVIEGA) are plays an important role in the hemolytic activity. Residues 46-65 (GATLTFNVLQTVLKALGDIS) are N-terminal region. Phosphocholine contacts are provided by S89, V122, S140, P142, Y168, Y172, and Y173. Residues 140 to 155 (SIPFDYNLYSNWWNVK) are trp-rich region, which is important for the binding to lipid membrane. Residues 179 to 181 (RGD) carry the Cell attachment site, crucial for protein stability motif.

It belongs to the actinoporin family. Sea anemone subfamily. In terms of assembly, octamer or nonamer in membranes. Monomer in the soluble state.

The protein resides in the secreted. Its subcellular location is the nematocyst. It localises to the target cell membrane. Pore-forming protein that forms cations-selective hydrophilic pores of around 1 nm and causes cytolysis. Pore formation is a multi-step process that involves specific recognition of membrane sphingomyelin (but neither cholesterol nor phosphatidylcholine) using aromatic rich region and adjacent phosphocholine (POC) binding site, firm binding to the membrane (mainly driven by hydrophobic interactions) accompanied by the transfer of the N-terminal region to the lipid-water interface and finally pore formation after oligomerization of monomers. This chain is DELTA-actitoxin-Aeq1b, found in Actinia equina (Beadlet anemone).